Consider the following 127-residue polypeptide: UPF0325 protein ASA_3165 (127 aa).

This sequence belongs to the UPF0325 family.

This Aeromonas salmonicida (strain A449) protein is UPF0325 protein ASA_3165.